The primary structure comprises 305 residues: MPMEILEERGHLLTEQTNPQSQNLDQLSSLELVDLFNQQDQLTVTAIAGAREDLAAAIEIISDALAKGGRLFYIGAGTSGRLGVLDAVECPPTFCTPSELVQGILAGGASALLRSSEGLEDIAADGAQAIADHRITQLDVVVGITAGGTTPYVHGALDAARARGTKTIFIACVPESQAPCQADVNIRLLTGPEILAGSTRLKAGTVTKMALNILSTGAMVKLGKVYGNRMVDVAVTNRKLEDRAIRILRDLTDLNREEAAELLVASGQRVKLALLMHWSGLSAESAQAQLDRHGGNLRQAMDAAP.

One can recognise an SIS domain in the interval 61–224; that stretch reads ISDALAKGGR…STGAMVKLGK (164 aa). The Proton donor role is filled by Glu89. Glu120 is a catalytic residue.

This sequence belongs to the GCKR-like family. MurNAc-6-P etherase subfamily. As to quaternary structure, homodimer.

It catalyses the reaction N-acetyl-D-muramate 6-phosphate + H2O = N-acetyl-D-glucosamine 6-phosphate + (R)-lactate. The protein operates within amino-sugar metabolism; N-acetylmuramate degradation. Functionally, specifically catalyzes the cleavage of the D-lactyl ether substituent of MurNAc 6-phosphate, producing GlcNAc 6-phosphate and D-lactate. This chain is N-acetylmuramic acid 6-phosphate etherase, found in Synechocystis sp. (strain ATCC 27184 / PCC 6803 / Kazusa).